A 185-amino-acid chain; its full sequence is Ribosome-recycling factor (185 aa).

Belongs to the RRF family.

It is found in the cytoplasm. Responsible for the release of ribosomes from messenger RNA at the termination of protein biosynthesis. May increase the efficiency of translation by recycling ribosomes from one round of translation to another. In Beutenbergia cavernae (strain ATCC BAA-8 / DSM 12333 / CCUG 43141 / JCM 11478 / NBRC 16432 / NCIMB 13614 / HKI 0122), this protein is Ribosome-recycling factor.